The primary structure comprises 197 residues: uncharacterized protein (197 aa).

This is an uncharacterized protein from Bacillus subtilis (strain 168).